The sequence spans 41 residues: DQPAERMQDDISSEHHPFFDPVKRCCKYGWTCVLGCSPCGC.

The propeptide occupies 1–24; sequence DQPAERMQDDISSEHHPFFDPVKR.

This sequence belongs to the conotoxin M superfamily. Contains 3 disulfide bonds. They are not added, since framework IV presents two different connectivities (I-V, II-III, IV-VI and I-III, II-V, IV-VI). Expressed by the venom duct.

The protein resides in the secreted. Mu-conotoxins block voltage-gated sodium channels (Nav). Blocks reversibly sodium channels in molluskan neurons, but has no effect on sodium currents in bovine chromaffin cells or in rat brain synaptosomes. Induces paralysis in mollusks (C.retripictus). The sequence is that of Mu-conotoxin pn4c from Conus pennaceus (Feathered cone).